We begin with the raw amino-acid sequence, 551 residues long: Arginine--tRNA ligase (551 aa).

Residues 125–135 carry the 'HIGH' region motif; sequence ANPTGPLHIGH.

This sequence belongs to the class-I aminoacyl-tRNA synthetase family. In terms of assembly, monomer.

The protein resides in the cytoplasm. It carries out the reaction tRNA(Arg) + L-arginine + ATP = L-arginyl-tRNA(Arg) + AMP + diphosphate. The sequence is that of Arginine--tRNA ligase from Nitratidesulfovibrio vulgaris (strain ATCC 29579 / DSM 644 / CCUG 34227 / NCIMB 8303 / VKM B-1760 / Hildenborough) (Desulfovibrio vulgaris).